The sequence spans 907 residues: Protein translocase subunit SecA (907 aa).

Residues Q87, 105-109, and D512 each bind ATP; that span reads GEGKT. The tract at residues 869-897 is disordered; sequence AESLSAHTPVVREGEKVGRNDPCPCGSGR. The segment covering 878–887 has biased composition (basic and acidic residues); the sequence is VVREGEKVGR. C891, C893, C902, and H903 together coordinate Zn(2+).

This sequence belongs to the SecA family. Monomer and homodimer. Part of the essential Sec protein translocation apparatus which comprises SecA, SecYEG and auxiliary proteins SecDF-YajC and YidC. The cofactor is Zn(2+).

It is found in the cell inner membrane. It localises to the cytoplasm. It catalyses the reaction ATP + H2O + cellular proteinSide 1 = ADP + phosphate + cellular proteinSide 2.. Part of the Sec protein translocase complex. Interacts with the SecYEG preprotein conducting channel. Has a central role in coupling the hydrolysis of ATP to the transfer of proteins into and across the cell membrane, serving both as a receptor for the preprotein-SecB complex and as an ATP-driven molecular motor driving the stepwise translocation of polypeptide chains across the membrane. In Shewanella sediminis (strain HAW-EB3), this protein is Protein translocase subunit SecA.